Here is a 61-residue protein sequence, read N- to C-terminus: Protein translocase subunit SecE (61 aa).

The helical transmembrane segment at 39–59 threads the bilayer; sequence LGILVIGLVGMLIRIIGILML.

The protein belongs to the SecE/SEC61-gamma family. Component of the Sec protein translocase complex. Heterotrimer consisting of SecY (alpha), SecG (beta) and SecE (gamma) subunits. The heterotrimers can form oligomers, although 1 heterotrimer is thought to be able to translocate proteins. Interacts with the ribosome. May interact with SecDF, and other proteins may be involved.

The protein resides in the cell membrane. Its function is as follows. Essential subunit of the Sec protein translocation channel SecYEG. Clamps together the 2 halves of SecY. May contact the channel plug during translocation. The protein is Protein translocase subunit SecE of Pyrococcus horikoshii (strain ATCC 700860 / DSM 12428 / JCM 9974 / NBRC 100139 / OT-3).